An 886-amino-acid polypeptide reads, in one-letter code: MSAHEVSSTKNSEIERIIKEAEDAGPENALTLDLSHLNLRELPYEQLERIQGRIARLALGHNFIKSIGPEILKFTRLRYLNIRSNVLREFPESLCRLESLEILDISRNKIKQLPESFGALMNLKVLSISKNRLFELPTYIAHMPNLEILKIENNHIVFPPPHIANNDLQDSDMQLFIANIKGYLSRNESVFRTRSESTVSAALSASANLSHSEENDSSVVDSYLFSAPSDTSHAVSPGMLTFVTPSPHSHSPAGHQQSTPKSTLSKTNENSEGTLYDSNVAHGCTHPPSLNQLNKFHLDASPRQARPRRSVSLATGLNSPSVSKPPSSATGPLYHSPQSSLTNSSVASADVQERTHNTNGASPIQDQISEFTDQHQNPSNNDAASTQSILKTAPTQLSASAKTSAISLPEVAKKERNRSNSTNDDYSSTRLPSSVLHRLEALKEARKLSEQLPNRIFAQDPHPSPRLKKEETHENGSNLTNDSVNSYFSNIGGSEVEMKHSAFEKTLESSRGILFSLSQVQQALRQQLLFCSNPVVLDSMRHVLHTANVQIKRLILCFEDTQQSNDGTANINSIVNASLSCISSFRKLIEVTKKFLNELTSRADVRYVRLLLLILFDAAKELQNALVPLSPSQPHSGNNIFADQVRQSPTSMIRTASGLTNRIVSVEKPASVMNPEIDKQIQDQVALATNSAMSVLTLLIDAVPKNNQPDLVNENIAPNLISKLRELGSLSAAACDVTRKLKHRLLTFQTNPEELEWQLFLDDTQAFVKSIIAVANLAKALSSEYTFQKSVLAGLSAATRSTKDLTILLSSSARHYTESSLATPVPLMSPIARVPATPLSAALGSAAQSITSPLIMSPAAIPASAYSTNKIDYFTDADGNVEGLQR.

LRR repeat units follow at residues 28-49, 53-74, 76-97, 99-120, 122-143, and 145-166; these read NALT…QLER, RIAR…ILKF, RLRY…LCRL, SLEI…FGAL, NLKV…IAHM, and NLEI…IANN. Disordered regions lie at residues 236 to 288, 301 to 364, 394 to 431, and 455 to 483; these read SPGM…THPP, SPRQ…ASPI, PTQL…STRL, and RIFA…TNDS. Polar residues predominate over residues 243-277; the sequence is VTPSPHSHSPAGHQQSTPKSTLSKTNENSEGTLYD. S301 bears the Phosphoserine mark. 3 stretches are compositionally biased toward polar residues: residues 312–347, 394–406, and 419–431; these read SLAT…SSVA, PTQL…TSAI, and SNST…STRL. S464 carries the phosphoserine modification.

The protein localises to the cytoplasm. The protein resides in the nucleus. This Schizosaccharomyces pombe (strain 972 / ATCC 24843) (Fission yeast) protein is Leucine-rich repeat-containing protein sog2.